A 446-amino-acid polypeptide reads, in one-letter code: Telomere-binding protein 51 kDa subunit (446 aa).

It belongs to the telombin family. As to quaternary structure, monomer.

It is found in the nucleus. The protein localises to the chromosome. The protein resides in the telomere. In terms of biological role, may function as protective capping of the single-stranded telomeric overhang. May also participate in telomere length regulation during DNA replication. Binds specifically to the T4G4-containing extension on the 3'strand and protects this region of the telomere from nuclease digestion and chemical modification. The protein is Telomere-binding protein 51 kDa subunit of Euplotes crassus.